Here is a 424-residue protein sequence, read N- to C-terminus: MGITIVLGSQWGDEGKGKITDMLSQQATLCCRAAGGHNAGHTIVHENITYDFHILPSGLVSPSCVNLIGAGTVVHVPSFFKELASLEEKGLKDAGKRIFISDRAHVCFDLHSIVDGLEEAKLGGRKVGTTGKGIGPCYSDKAARRGVRIGEVLDEAVFERKLRSLHAGYTARFGELQYDVEEEIGRFKDYRKRLVPYIVDQLAFFKQYKDSPNTLVEGANALMLDLDHGTYPYVTSSSTGLGGAVQALSLNPTSITSVIGVVKAYTTRVGSGPFPSEQLNEYGDKLQSVGREFGVTTGRRRRCGWFDLVLCRYSQAINHYTALNLTKLDILDDFDEIKVAVAYVLPDGTRLTDTYPADPEVLEKVKVEYVTLPGWKSNTMGVKKYEDLPANARAYIEYIERELGGVPIKWIGTGPARDHMICRE.

GTP contacts are provided by residues 12–18 (GDEGKGK) and 40–42 (GHT). The active-site Proton acceptor is the Asp-13. Residues Asp-13 and Gly-40 each coordinate Mg(2+). IMP is bound by residues 13 to 16 (DEGK), 38 to 41 (NAGH), Thr-130, Arg-144, Asn-220, Thr-235, and Arg-299. His-41 (proton donor) is an active-site residue. A substrate-binding site is contributed by 295 to 301 (VTTGRRR). Residues Arg-301, 327-329 (KLD), and 412-414 (GTG) contribute to the GTP site.

The protein belongs to the adenylosuccinate synthetase family. In terms of assembly, homodimer. It depends on Mg(2+) as a cofactor.

The protein localises to the cytoplasm. It catalyses the reaction IMP + L-aspartate + GTP = N(6)-(1,2-dicarboxyethyl)-AMP + GDP + phosphate + 2 H(+). Its pathway is purine metabolism; AMP biosynthesis via de novo pathway; AMP from IMP: step 1/2. Plays an important role in the de novo pathway and in the salvage pathway of purine nucleotide biosynthesis. Catalyzes the first committed step in the biosynthesis of AMP from IMP. This Aspergillus fumigatus (strain CBS 144.89 / FGSC A1163 / CEA10) (Neosartorya fumigata) protein is Adenylosuccinate synthetase.